The primary structure comprises 218 residues: Hypoxanthine-guanine phosphoribosyltransferase (218 aa).

Alanine 2 carries the N-acetylalanine modification. Lysine 69 contacts GMP. An N6-acetyllysine modification is found at lysine 103. Lysine 115 participates in a covalent cross-link: Glycyl lysine isopeptide (Lys-Gly) (interchain with G-Cter in SUMO1); alternate. A Glycyl lysine isopeptide (Lys-Gly) (interchain with G-Cter in SUMO2); alternate cross-link involves residue lysine 115. GMP-binding positions include glutamate 134 to threonine 142, lysine 166, lysine 186 to valine 188, and aspartate 194. The active-site Proton acceptor is the aspartate 138. Threonine 142 bears the Phosphothreonine mark. A Mg(2+)-binding site is contributed by aspartate 194.

Belongs to the purine/pyrimidine phosphoribosyltransferase family. In terms of assembly, homotetramer. Mg(2+) is required as a cofactor.

It is found in the cytoplasm. The catalysed reaction is IMP + diphosphate = hypoxanthine + 5-phospho-alpha-D-ribose 1-diphosphate. It catalyses the reaction GMP + diphosphate = guanine + 5-phospho-alpha-D-ribose 1-diphosphate. Its pathway is purine metabolism; IMP biosynthesis via salvage pathway; IMP from hypoxanthine: step 1/1. In terms of biological role, converts guanine to guanosine monophosphate, and hypoxanthine to inosine monophosphate. Transfers the 5-phosphoribosyl group from 5-phosphoribosylpyrophosphate onto the purine. Plays a central role in the generation of purine nucleotides through the purine salvage pathway. The protein is Hypoxanthine-guanine phosphoribosyltransferase (HPRT1) of Sus scrofa (Pig).